Consider the following 152-residue polypeptide: Endoribonuclease YbeY (152 aa).

Zn(2+)-binding residues include His112, His116, and His122.

It belongs to the endoribonuclease YbeY family. Requires Zn(2+) as cofactor.

The protein localises to the cytoplasm. Single strand-specific metallo-endoribonuclease involved in late-stage 70S ribosome quality control and in maturation of the 3' terminus of the 16S rRNA. This chain is Endoribonuclease YbeY, found in Pseudoalteromonas translucida (strain TAC 125).